Here is a 492-residue protein sequence, read N- to C-terminus: Proline--tRNA ligase (492 aa).

The protein belongs to the class-II aminoacyl-tRNA synthetase family. ProS type 3 subfamily. Homodimer.

It localises to the cytoplasm. The catalysed reaction is tRNA(Pro) + L-proline + ATP = L-prolyl-tRNA(Pro) + AMP + diphosphate. In terms of biological role, catalyzes the attachment of proline to tRNA(Pro) in a two-step reaction: proline is first activated by ATP to form Pro-AMP and then transferred to the acceptor end of tRNA(Pro). The protein is Proline--tRNA ligase of Flavobacterium johnsoniae (strain ATCC 17061 / DSM 2064 / JCM 8514 / BCRC 14874 / CCUG 350202 / NBRC 14942 / NCIMB 11054 / UW101) (Cytophaga johnsonae).